A 151-amino-acid chain; its full sequence is UPF0178 protein Sde_3033 (151 aa).

This sequence belongs to the UPF0178 family.

This chain is UPF0178 protein Sde_3033, found in Saccharophagus degradans (strain 2-40 / ATCC 43961 / DSM 17024).